The following is a 1319-amino-acid chain: DNA (cytosine-5)-methyltransferase CMT2 (1319 aa).

Residues 1 to 15 are compositionally biased toward pro residues; the sequence is METPPPDPVSPPPPA. 4 disordered regions span residues 1–34, 142–189, 265–302, and 442–468; these read METPPPDPVSPPPPAADEGSPGGDDGAEDAGGFS, ALDS…VASS, SAASSMPLNQNGDSSRASKRRVADSRKSRSSEGSKLPA, and KSRVVSKTPQGRGRRSPQPPKTQRART. Positions 266-279 are enriched in polar residues; sequence AASSMPLNQNGDSS. Over residues 285–296 the composition is skewed to basic and acidic residues; it reads RVADSRKSRSSE. One can recognise a BAH domain in the interval 602 to 719; sequence YTFCIGECAF…IDYSTFSTIE (118 aa). An SAM-dependent MTase C5-type domain is found at 758-1296; sequence LSLLDLYCGC…YALAMAYLKK (539 aa). In terms of domain architecture, Chromo spans 863–928; the sequence is FEVWKLVDIC…EGHRQRILPR (66 aa). Cysteine 941 is a catalytic residue.

The protein resides in the nucleus. It carries out the reaction a 2'-deoxycytidine in DNA + S-adenosyl-L-methionine = a 5-methyl-2'-deoxycytidine in DNA + S-adenosyl-L-homocysteine + H(+). Functionally, involved in CpXpG DNA methylation. This is DNA (cytosine-5)-methyltransferase CMT2 from Oryza sativa subsp. japonica (Rice).